We begin with the raw amino-acid sequence, 33 residues long: Glucagon-2 (33 aa).

This sequence belongs to the glucagon family.

The protein resides in the secreted. Promotes hydrolysis of glycogen and lipids, and raises the blood sugar level. The polypeptide is Glucagon-2 (gcg2) (Oreochromis niloticus (Nile tilapia)).